The following is a 436-amino-acid chain: Alpha-galactosidase mel1 (436 aa).

An N-terminal signal peptide occupies residues 1–24; the sequence is MISISFLNCFFLVFLFLFFSDVHG. Residues Cys45 and Cys77 are joined by a disulfide bond. Asn84 carries N-linked (GlcNAc...) asparagine glycosylation. Cysteines 126 and 156 form a disulfide. Asp154 serves as the catalytic Nucleophile. Asn180 carries N-linked (GlcNAc...) asparagine glycosylation. The active-site Proton donor is the Asp214.

The protein belongs to the glycosyl hydrolase 27 family.

The protein resides in the endoplasmic reticulum lumen. It localises to the secreted. It carries out the reaction Hydrolysis of terminal, non-reducing alpha-D-galactose residues in alpha-D-galactosides, including galactose oligosaccharides, galactomannans and galactolipids.. Functionally, secreted alpha-galactosidase required for catabolic conversion of melibiose to glucose and galactose. This Schizosaccharomyces pombe (strain 972 / ATCC 24843) (Fission yeast) protein is Alpha-galactosidase mel1 (mel1).